The chain runs to 329 residues: 4-diphosphocytidyl-2-C-methyl-D-erythritol kinase (329 aa).

Residue Lys-14 is part of the active site. Position 117–127 (117–127) interacts with ATP; that stretch reads PSGAGMGGASS. Asp-166 is an active-site residue.

Belongs to the GHMP kinase family. IspE subfamily.

It carries out the reaction 4-CDP-2-C-methyl-D-erythritol + ATP = 4-CDP-2-C-methyl-D-erythritol 2-phosphate + ADP + H(+). The protein operates within isoprenoid biosynthesis; isopentenyl diphosphate biosynthesis via DXP pathway; isopentenyl diphosphate from 1-deoxy-D-xylulose 5-phosphate: step 3/6. Catalyzes the phosphorylation of the position 2 hydroxy group of 4-diphosphocytidyl-2C-methyl-D-erythritol. The sequence is that of 4-diphosphocytidyl-2-C-methyl-D-erythritol kinase from Rhodopirellula baltica (strain DSM 10527 / NCIMB 13988 / SH1).